The sequence spans 253 residues: Vitamin B12 import ATP-binding protein BtuD (253 aa).

An ABC transporter domain is found at 4-236; sequence LQLSNVSVDT…NILSEVFEVD (233 aa). 32–39 provides a ligand contact to ATP; the sequence is GPNGAGKS.

Belongs to the ABC transporter superfamily. Vitamin B12 importer (TC 3.A.1.13.1) family. In terms of assembly, the complex is composed of two ATP-binding proteins (BtuD), two transmembrane proteins (BtuC) and a solute-binding protein (BtuF).

Its subcellular location is the cell inner membrane. It catalyses the reaction an R-cob(III)alamin(out) + ATP + H2O = an R-cob(III)alamin(in) + ADP + phosphate + H(+). Part of the ABC transporter complex BtuCDF involved in vitamin B12 import. Responsible for energy coupling to the transport system. The chain is Vitamin B12 import ATP-binding protein BtuD from Yersinia enterocolitica serotype O:8 / biotype 1B (strain NCTC 13174 / 8081).